The chain runs to 71 residues: uncharacterized protein (71 aa).

Residues 2–24 form a helical membrane-spanning segment; sequence IIAIVAVVIFLLNFLTPYGYMPM. The tract at residues 48–71 is disordered; sequence PAESSSNGGSMITKPSTGACQGGR. The segment covering 49 to 71 has biased composition (polar residues); that stretch reads AESSSNGGSMITKPSTGACQGGR.

It localises to the membrane. This is an uncharacterized protein from Archaeoglobus fulgidus (strain ATCC 49558 / DSM 4304 / JCM 9628 / NBRC 100126 / VC-16).